Reading from the N-terminus, the 337-residue chain is Ketol-acid reductoisomerase (NADP(+)) (337 aa).

In terms of domain architecture, KARI N-terminal Rossmann spans valine 3–threonine 183. Residues tyrosine 26–glutamine 29, lysine 49, serine 52, serine 54, and aspartate 84–glutamine 87 contribute to the NADP(+) site. The active site involves histidine 109. Glycine 135 contributes to the NADP(+) binding site. The 146-residue stretch at threonine 184–valine 329 folds into the KARI C-terminal knotted domain. Residues aspartate 192, glutamate 196, glutamate 228, and glutamate 232 each contribute to the Mg(2+) site. Serine 253 provides a ligand contact to substrate.

This sequence belongs to the ketol-acid reductoisomerase family. The cofactor is Mg(2+).

The catalysed reaction is (2R)-2,3-dihydroxy-3-methylbutanoate + NADP(+) = (2S)-2-acetolactate + NADPH + H(+). It carries out the reaction (2R,3R)-2,3-dihydroxy-3-methylpentanoate + NADP(+) = (S)-2-ethyl-2-hydroxy-3-oxobutanoate + NADPH + H(+). It participates in amino-acid biosynthesis; L-isoleucine biosynthesis; L-isoleucine from 2-oxobutanoate: step 2/4. It functions in the pathway amino-acid biosynthesis; L-valine biosynthesis; L-valine from pyruvate: step 2/4. In terms of biological role, involved in the biosynthesis of branched-chain amino acids (BCAA). Catalyzes an alkyl-migration followed by a ketol-acid reduction of (S)-2-acetolactate (S2AL) to yield (R)-2,3-dihydroxy-isovalerate. In the isomerase reaction, S2AL is rearranged via a Mg-dependent methyl migration to produce 3-hydroxy-3-methyl-2-ketobutyrate (HMKB). In the reductase reaction, this 2-ketoacid undergoes a metal-dependent reduction by NADPH to yield (R)-2,3-dihydroxy-isovalerate. The polypeptide is Ketol-acid reductoisomerase (NADP(+)) (Rhodococcus opacus (strain B4)).